The following is a 196-amino-acid chain: Phosphoheptose isomerase (196 aa).

Positions 38–196 (LIAGYRAGAR…VEHALFAPRQ (159 aa)) constitute an SIS domain. 53–55 (NGG) is a substrate binding site. Zn(2+)-binding residues include His62 and Glu66. Substrate contacts are provided by residues Glu66, 95–96 (ND), 121–123 (STS), Ser126, and Gln173. Zn(2+) contacts are provided by Gln173 and His181.

This sequence belongs to the SIS family. GmhA subfamily. It depends on Zn(2+) as a cofactor.

The protein resides in the cytoplasm. The catalysed reaction is 2 D-sedoheptulose 7-phosphate = D-glycero-alpha-D-manno-heptose 7-phosphate + D-glycero-beta-D-manno-heptose 7-phosphate. It participates in carbohydrate biosynthesis; D-glycero-D-manno-heptose 7-phosphate biosynthesis; D-glycero-alpha-D-manno-heptose 7-phosphate and D-glycero-beta-D-manno-heptose 7-phosphate from sedoheptulose 7-phosphate: step 1/1. Functionally, catalyzes the isomerization of sedoheptulose 7-phosphate in D-glycero-D-manno-heptose 7-phosphate. The polypeptide is Phosphoheptose isomerase (Mycobacterium bovis (strain ATCC BAA-935 / AF2122/97)).